We begin with the raw amino-acid sequence, 970 residues long: MEEIMIQSIDESIHCGLIKNALFLSERLYASTANEDNLFKIAQIYYQMGKINQCLLILQQHPQITMIKNLYLLALSNYDLGNIQEAESSIIKCCIYFEKYFQPNNNNNNNNNNNNNNNNNNNNNNNNNKDKCNNSNKNNDSNNNSNSNNNENEYYGIYSDILCEFDDIVDINSISYGFDSPCSIGSVYYLMGLISKRKNQKEKAIKYLKKSVYTYPFLWVAFEQLCNICPDEIDISDLFSHTNLIHQINHLNQQQHQQHQQFQQYLSNSLNQNKVNNNNNNNNNNNNNINNNNSSNKNNEQTITSTVATGTTNITTNTIKPNNFIKPPYHPNHRVGLTPSSFYDSSIHITPINFKASIQQTNQQQQQQQQQQPQQPSQQNLQKYNNRYFVTPQTPLSHITPILSNRFSQNVVDPIPMVMDTPDSKGSQHPPSSNSQTPYTPSTPGVHHHQKQQPHQHKKSAPPSQMIKKSMSNEFDTPMSLDLKSPIFTTSTSSDVHGFTSSTSKQQQQQQQTKQQTTTTTTTTTSITDKEVLLTKTKKQVNFGKTEEFSLKSLSSSLSDDDYDEENHHYQQHHHLHHHNKSIDELELEEDDQLNITDNSVQPNFYEFDESSILDFNGGDLYEGLIELHKGQTQLLELFFILADSYRLLCLYLCKEAIESFKRLSEEQYRTGWVLTKVAKAYHELIDYKEARSIFQEVSQMEPYRLEGMELYSTLLWQMNEDAELSYIAHKYSEFDRLSPYSWVVVGNCFSLQRDHEAAIKLFRRAIQLDPDMTYAYTLCGHEYLANDELELALNAFRMAIRCDPRHYNAFYGIGLIYYRQEKYNLAEYHFRKALSINESSSVLCCYLGMTLQHNPNKIQDGIDMLYRSIEIQPKNTFAKFKLAAFLFANQQYHHAIDQLLEFKEIEPKETPIYILLGKCYKQLGELDKALDSLNTALDLDPKNSNYIRSLIDKLPLEDEDDNQDYFQLN.

4 TPR repeats span residues 35-68 (EDNLFKIAQIYYQMGKINQCLLILQQHPQITMIK), 74-107 (ALSNYDLGNIQEAESSIIKCCIYFEKYFQPNNNN), 142-175 (NNNSNSNNNENEYYGIYSDILCEFDDIVDINSIS), and 185-218 (GSVYYLMGLISKRKNQKEKAIKYLKKSVYTYPFL). The segment at 106–149 (NNNNNNNNNNNNNNNNNNNNNNNKDKCNNSNKNNDSNNNSNSNN) is disordered. The disordered stretch occupies residues 274-300 (KVNNNNNNNNNNNNNINNNNSSNKNNE). 2 TPR repeats span residues 319 to 353 (IKPNNFIKPPYHPNHRVGLTPSSFYDSSIHITPIN) and 361 to 394 (TNQQQQQQQQQQPQQPSQQNLQKYNNRYFVTPQT). 3 disordered regions span residues 358-379 (IQQTNQQQQQQQQQQPQQPSQQ), 414-525 (PIPM…TTTT), and 556-582 (SSLSDDDYDEENHHYQQHHHLHHHNKS). Residues 359 to 379 (QQTNQQQQQQQQQQPQQPSQQ) show a composition bias toward low complexity. A compositionally biased stretch (polar residues) spans 424–443 (SKGSQHPPSSNSQTPYTPST). The span at 446-460 (VHHHQKQQPHQHKKS) shows a compositional bias: basic residues. Low complexity predominate over residues 500 to 525 (TSSTSKQQQQQQQTKQQTTTTTTTTT). 9 TPR repeats span residues 546–580 (TEEFSLKSLSSSLSDDDYDEENHHYQQHHHLHHHN), 636–671 (LELFFILADSYRLLCLYLCKEAIESFKRLSEEQYRT), 672–705 (GWVLTKVAKAYHELIDYKEARSIFQEVSQMEPYR), 740–773 (PYSWVVVGNCFSLQRDHEAAIKLFRRAIQLDPDM), 775–807 (YAYTLCGHEYLANDELELALNAFRMAIRCDPRH), 808–841 (YNAFYGIGLIYYRQEKYNLAEYHFRKALSINESS), 843–876 (VLCCYLGMTLQHNPNKIQDGIDMLYRSIEIQPKN), 878–910 (FAKFKLAAFLFANQQYHHAIDQLLEFKEIEPKE), and 911–944 (TPIYILLGKCYKQLGELDKALDSLNTALDLDPKN). The segment covering 570–580 (YQQHHHLHHHN) has biased composition (basic residues).

It belongs to the APC3/CDC27 family. The APC/C is composed of at least 13 subunits that stay tightly associated throughout the cell cycle: anapc1, anapc2, anapc3, anapc4, anapc5, anapc6, anapc7, anapc8, anapc10, anapc11, cdc20, cdc26 and cdh1.

It is found in the nucleus. The protein operates within protein modification; protein ubiquitination. In terms of biological role, component of the anaphase promoting complex/cyclosome (APC/C), a cell cycle-regulated E3 ubiquitin-protein ligase complex that controls progression through mitosis and the G1 phase of the cell cycle. The chain is Anaphase-promoting complex subunit 3 (anapc3) from Dictyostelium discoideum (Social amoeba).